The primary structure comprises 472 residues: Proline--tRNA ligase (472 aa).

It belongs to the class-II aminoacyl-tRNA synthetase family. ProS type 3 subfamily. Homodimer.

The protein resides in the cytoplasm. It catalyses the reaction tRNA(Pro) + L-proline + ATP = L-prolyl-tRNA(Pro) + AMP + diphosphate. Catalyzes the attachment of proline to tRNA(Pro) in a two-step reaction: proline is first activated by ATP to form Pro-AMP and then transferred to the acceptor end of tRNA(Pro). The chain is Proline--tRNA ligase from Ureaplasma parvum serovar 3 (strain ATCC 27815 / 27 / NCTC 11736).